Consider the following 153-residue polypeptide: Heavy metal-associated isoprenylated plant protein 26 (153 aa).

The region spanning 25-89 (LQTVEIKVKM…MSHRTGKKVE (65 aa)) is the HMA domain. A metal cation is bound by residues C36 and C39. Cysteine methyl ester is present on C150. C150 carries S-farnesyl cysteine lipidation. Residues 151–153 (VVM) constitute a propeptide, removed in mature form.

It belongs to the HIPP family. Interacts with ZHD11/HB29 and ACBP2 (via ankyrin repeats). May also interact with HB21. Expressed in roots, stems and flowers. Lower expression in siliques and leaves. Expressed in the vascular tissues. Detected in lateral roots, shoot apical meristem, petals of unopened flowers and weak expression in leaf vasculature.

It is found in the nucleus membrane. The protein localises to the cell membrane. Its function is as follows. Heavy-metal-binding protein. Binds lead, cadmium and copper. May be involved in heavy-metal transport. May be involved in cadmium transport and play a role in cadmium detoxification. This Arabidopsis thaliana (Mouse-ear cress) protein is Heavy metal-associated isoprenylated plant protein 26.